The following is a 721-amino-acid chain: Fatty acid oxidation complex subunit alpha (721 aa).

The enoyl-CoA hydratase/isomerase stretch occupies residues 1–190 (MIYEGKAITV…KVGAVDAVVA (190 aa)). Residue Asp-297 participates in substrate binding. Positions 312 to 721 (KDVKQAAVLG…SFFGQASSEE (410 aa)) are 3-hydroxyacyl-CoA dehydrogenase. NAD(+) contacts are provided by residues Met-325, Asp-344, 401–403 (VVE), Lys-408, and Ser-430. Catalysis depends on His-451, which acts as the For 3-hydroxyacyl-CoA dehydrogenase activity. NAD(+) is bound at residue Asn-454. 2 residues coordinate substrate: Asn-501 and Tyr-660.

It in the N-terminal section; belongs to the enoyl-CoA hydratase/isomerase family. In the C-terminal section; belongs to the 3-hydroxyacyl-CoA dehydrogenase family. Heterotetramer of two alpha chains (FadB) and two beta chains (FadA).

It carries out the reaction a (3S)-3-hydroxyacyl-CoA + NAD(+) = a 3-oxoacyl-CoA + NADH + H(+). It catalyses the reaction a (3S)-3-hydroxyacyl-CoA = a (2E)-enoyl-CoA + H2O. The catalysed reaction is a 4-saturated-(3S)-3-hydroxyacyl-CoA = a (3E)-enoyl-CoA + H2O. The enzyme catalyses (3S)-3-hydroxybutanoyl-CoA = (3R)-3-hydroxybutanoyl-CoA. It carries out the reaction a (3Z)-enoyl-CoA = a 4-saturated (2E)-enoyl-CoA. It catalyses the reaction a (3E)-enoyl-CoA = a 4-saturated (2E)-enoyl-CoA. Its pathway is lipid metabolism; fatty acid beta-oxidation. Its function is as follows. Involved in the aerobic and anaerobic degradation of long-chain fatty acids via beta-oxidation cycle. Catalyzes the formation of 3-oxoacyl-CoA from enoyl-CoA via L-3-hydroxyacyl-CoA. It can also use D-3-hydroxyacyl-CoA and cis-3-enoyl-CoA as substrate. The chain is Fatty acid oxidation complex subunit alpha from Pseudomonas savastanoi pv. phaseolicola (strain 1448A / Race 6) (Pseudomonas syringae pv. phaseolicola (strain 1448A / Race 6)).